A 250-amino-acid polypeptide reads, in one-letter code: ATP synthase subunit a (250 aa).

Transmembrane regions (helical) follow at residues 29 to 49, 84 to 104, 114 to 134, 143 to 163, 193 to 213, and 216 to 236; these read ASLF…FATS, FFPL…LGMF, IIVT…YGFY, VFVP…IEII, FVAS…LPLI, and VALT…FAVL.

It belongs to the ATPase A chain family. In terms of assembly, F-type ATPases have 2 components, CF(1) - the catalytic core - and CF(0) - the membrane proton channel. CF(1) has five subunits: alpha(3), beta(3), gamma(1), delta(1), epsilon(1). CF(0) has three main subunits: a(1), b(2) and c(9-12). The alpha and beta chains form an alternating ring which encloses part of the gamma chain. CF(1) is attached to CF(0) by a central stalk formed by the gamma and epsilon chains, while a peripheral stalk is formed by the delta and b chains.

The protein resides in the cell inner membrane. In terms of biological role, key component of the proton channel; it plays a direct role in the translocation of protons across the membrane. This Rhizobium leguminosarum bv. trifolii (strain WSM2304) protein is ATP synthase subunit a.